The sequence spans 160 residues: H/ACA ribonucleoprotein complex subunit 2 (160 aa).

A Phosphoserine modification is found at serine 15. Threonine 23 carries the phosphothreonine modification.

This sequence belongs to the eukaryotic ribosomal protein eL8 family. In terms of assembly, component of the box H/ACA small nucleolar ribonucleoprotein (H/ACA snoRNP) complex consisting of Nop60B, Gar1, NPH2 and Nop10, and associated with H/ACA-type snoRNAs.

It localises to the nucleus. The protein resides in the nucleolus. Functionally, component of the box H/ACA small nucleolar ribonucleoprotein (H/ACA snoRNP) complex, which catalyzes pseudouridylation of rRNA. This involves the isomerization of uridine such that the ribose is subsequently attached to C5, instead of the normal N1. Pseudouridine ('psi') residues may serve to stabilize the conformation of rRNAs. Required for ribosome biogenesis. H/ACA snoRNP complex-dependent ribosome biogenesis is important in female germline cell differentiation during oogenesis. This is H/ACA ribonucleoprotein complex subunit 2 from Drosophila melanogaster (Fruit fly).